A 504-amino-acid chain; its full sequence is ATP synthase subunit alpha (504 aa).

172–179 contacts ATP; it reads GDRQTGKT.

This sequence belongs to the ATPase alpha/beta chains family. As to quaternary structure, F-type ATPases have 2 components, CF(1) - the catalytic core - and CF(0) - the membrane proton channel. CF(1) has five subunits: alpha(3), beta(3), gamma(1), delta(1), epsilon(1). CF(0) has three main subunits: a(1), b(2) and c(9-12). The alpha and beta chains form an alternating ring which encloses part of the gamma chain. CF(1) is attached to CF(0) by a central stalk formed by the gamma and epsilon chains, while a peripheral stalk is formed by the delta and b chains.

It is found in the cell inner membrane. The catalysed reaction is ATP + H2O + 4 H(+)(in) = ADP + phosphate + 5 H(+)(out). In terms of biological role, produces ATP from ADP in the presence of a proton gradient across the membrane. The alpha chain is a regulatory subunit. This is ATP synthase subunit alpha from Petrotoga mobilis (strain DSM 10674 / SJ95).